Reading from the N-terminus, the 62-residue chain is Large ribosomal subunit protein bL32 (62 aa).

Positions 1-16 (MAVPKRKTSPSRRGMR) are enriched in basic residues. The disordered stretch occupies residues 1 to 44 (MAVPKRKTSPSRRGMRRSADALKAPTYVEDKDSGELRRPHHIDL). Over residues 28–44 (VEDKDSGELRRPHHIDL) the composition is skewed to basic and acidic residues.

The protein belongs to the bacterial ribosomal protein bL32 family.

In Methylorubrum extorquens (strain CM4 / NCIMB 13688) (Methylobacterium extorquens), this protein is Large ribosomal subunit protein bL32.